Consider the following 855-residue polypeptide: Vomeronasal type-2 receptor 26 (855 aa).

The signal sequence occupies residues 1 to 22; sequence MKLLTAFSPLVVLILFQEQISC. Topologically, residues 23–595 are extracellular; that stretch reads YYLTKYASSG…FLAHEDPLGT (573 aa). N-linked (GlcNAc...) asparagine glycans are attached at residues N101 and N295. Residues 596 to 616 form a helical membrane-spanning segment; it reads VLVSLAISLSAFSAMILGLFI. The Cytoplasmic portion of the chain corresponds to 617–630; that stretch reads CYRETPIVRANNRN. Residues 631–651 traverse the membrane as a helical segment; sequence LSYLLLISLKLCFSCSLMFIG. Residues 652 to 662 are Extracellular-facing; it reads QPRTVTCVLRQ. A helical membrane pass occupies residues 663–683; it reads IIFGIVFSIVISAILAKTFIV. The Cytoplasmic portion of the chain corresponds to 684–706; the sequence is VMAFKAIKPGSILKMGMVTRLSN. A helical membrane pass occupies residues 707–727; that stretch reads AIVCCGSIIQVCICAVWLGTY. Over 728 to 753 the chain is Extracellular; the sequence is PPFPDVDMHSEFGQIILWCNEGSTLA. Residues 754 to 774 form a helical membrane-spanning segment; it reads FYCVLGYLGFLASLSLLIAFL. The Cytoplasmic portion of the chain corresponds to 775 to 786; sequence ARRLPDSFNEAK. The helical transmembrane segment at 787 to 807 threads the bilayer; that stretch reads TITFSMLVFCSVWISFVPAYL. The Extracellular segment spans residues 808 to 814; the sequence is SSKGKTM. The chain crosses the membrane as a helical span at residues 815-835; that stretch reads VAVEILSILASSAGLLGCIFL. Topologically, residues 836–855 are cytoplasmic; sequence PKCYVILLKSGGHSRKKFFK.

This sequence belongs to the G-protein coupled receptor 3 family. In terms of tissue distribution, expressed in the basal epithelium of the vomeronasal organ. Located to vomeronasal sensory neurons that project their axons to six to ten glomeruli that reside in globally conserved areas within the caudal accessory olfactory bulb (AOB).

The protein resides in the cell membrane. Putative pheromone receptor. The polypeptide is Vomeronasal type-2 receptor 26 (Vmn2r26) (Mus musculus (Mouse)).